A 271-amino-acid chain; its full sequence is Short-chain dehydrogenase PC-15 (271 aa).

9 residues coordinate NADP(+): isoleucine 8, threonine 34, lysine 40, aspartate 56, asparagine 84, tyrosine 148, lysine 152, valine 181, and threonine 183. The Proton acceptor role is filled by tyrosine 148. Lysine 152 acts as the Lowers pKa of active site Tyr in catalysis.

The protein belongs to the short-chain dehydrogenases/reductases (SDR) family.

It participates in secondary metabolite biosynthesis. Short-chain dehydrogenase; part of the gene cluster that mediates the biosynthesis of the indole diterpenes penitrems. The geranylgeranyl diphosphate (GGPP) synthase penG catalyzes the first step in penitrem biosynthesis via conversion of farnesyl pyrophosphate and isopentyl pyrophosphate into geranylgeranyl pyrophosphate (GGPP). Condensation of indole-3-glycerol phosphate with GGPP by the prenyl transferase penC then forms 3-geranylgeranylindole (3-GGI). Epoxidation by the FAD-dependent monooxygenase penM leads to a epoxidized-GGI that is substrate of the terpene cyclase penB for cyclization to yield paspaline. Paspaline is subsequently converted to 13-desoxypaxilline by the cytochrome P450 monooxygenase penP, the latter being then converted to paxilline by the cytochrome P450 monooxygenase penQ. Paxilline is converted to beta-paxitriol via C-10 ketoreduction by the short-chain dehydrogenase PC-15 which can be monoprenylated at the C-20 by the indole diterpene prenyltransferase penD. A two-step elimination (acetylation and elimination) process performed by the O-acetyltransferase PC-16 and the P.simplicissimum ptmI-ortholog not yet identified in P.crustosum, leads to the production of the prenylated form of penijanthine. The FAD-linked oxidoreductase ptmO then converts the prenylated form of penijanthine into PC-M5 which is in turn transformed into PC-M4 by the aromatic dimethylallyltransferase PC-22. A series of oxidation steps involving 4 cytochrome P450 monooxygenases (PC-21, PC-05, PC-23, PC-20) and a FAD-dependent monooxygenase (PC-14) are required for the transformation of PC-M4 to penitrems A and E. Synthesis of these final products is proposed to proceed via penitrems D and C (PC-21, PC-05, PC-14) and penitrems B and F (PC-21, PC-05, PC-14, PC-23). This Penicillium crustosum (Blue mold fungus) protein is Short-chain dehydrogenase PC-15.